The chain runs to 722 residues: Probable cation-transporting ATPase HI_0290 (722 aa).

An HMA domain is found at 9-75 (KKISIQIGGM…IIHKTGFSAH (67 aa)). A metal cation contacts are provided by C20 and C23. Helical transmembrane passes span 94–114 (LIVL…MIGG), 118–138 (LMLP…WLAI), 157–177 (VLVS…LFYH), 180–200 (HAMG…VSLG), 340–360 (VFVP…YILT), and 373–393 (VLVI…IMVG). Residue D422 is the 4-aspartylphosphate intermediate of the active site. The next 4 membrane-spanning stretches (helical) occupy residues 523–543 (IWQI…GAFA), 608–628 (LGHI…LASA), 675–695 (LFFA…GFLS), and 697–717 (IIAG…ALRL). Residues D617 and D621 each contribute to the Mg(2+) site.

It belongs to the cation transport ATPase (P-type) (TC 3.A.3) family. Type IB subfamily.

It is found in the cell membrane. It catalyses the reaction ATP + H2O = ADP + phosphate + H(+). The protein is Probable cation-transporting ATPase HI_0290 of Haemophilus influenzae (strain ATCC 51907 / DSM 11121 / KW20 / Rd).